A 290-amino-acid chain; its full sequence is 4-hydroxy-tetrahydrodipicolinate synthase (290 aa).

Position 44 (T44) interacts with pyruvate. Y132 functions as the Proton donor/acceptor in the catalytic mechanism. K160 acts as the Schiff-base intermediate with substrate in catalysis. I202 is a binding site for pyruvate.

Belongs to the DapA family. In terms of assembly, homotetramer; dimer of dimers.

The protein localises to the cytoplasm. The catalysed reaction is L-aspartate 4-semialdehyde + pyruvate = (2S,4S)-4-hydroxy-2,3,4,5-tetrahydrodipicolinate + H2O + H(+). It functions in the pathway amino-acid biosynthesis; L-lysine biosynthesis via DAP pathway; (S)-tetrahydrodipicolinate from L-aspartate: step 3/4. In terms of biological role, catalyzes the condensation of (S)-aspartate-beta-semialdehyde [(S)-ASA] and pyruvate to 4-hydroxy-tetrahydrodipicolinate (HTPA). This chain is 4-hydroxy-tetrahydrodipicolinate synthase, found in Geobacter sp. (strain M21).